The chain runs to 304 residues: GTP cyclohydrolase FolE2 (304 aa).

It belongs to the GTP cyclohydrolase IV family.

It catalyses the reaction GTP + H2O = 7,8-dihydroneopterin 3'-triphosphate + formate + H(+). It functions in the pathway cofactor biosynthesis; 7,8-dihydroneopterin triphosphate biosynthesis; 7,8-dihydroneopterin triphosphate from GTP: step 1/1. Its function is as follows. Converts GTP to 7,8-dihydroneopterin triphosphate. The sequence is that of GTP cyclohydrolase FolE2 from Chromohalobacter salexigens (strain ATCC BAA-138 / DSM 3043 / CIP 106854 / NCIMB 13768 / 1H11).